The primary structure comprises 490 residues: Cytochrome P450 2C38 (490 aa).

An N-terminal signal peptide occupies residues methionine 1–tryptophan 20. Position 435 (cysteine 435) interacts with heme.

Belongs to the cytochrome P450 family. It depends on heme as a cofactor. As to expression, liver, brain, kidney, and intestine, with trace amounts in lung and heart.

The protein localises to the endoplasmic reticulum membrane. It is found in the microsome membrane. It carries out the reaction an organic molecule + reduced [NADPH--hemoprotein reductase] + O2 = an alcohol + oxidized [NADPH--hemoprotein reductase] + H2O + H(+). The enzyme catalyses (5Z,8Z,11Z,14Z)-eicosatetraenoate + reduced [NADPH--hemoprotein reductase] + O2 = 11,12-epoxy-(5Z,8Z,14Z)-eicosatrienoate + oxidized [NADPH--hemoprotein reductase] + H2O + H(+). The protein operates within lipid metabolism; arachidonate metabolism. A cytochrome P450 monooxygenase that primarily catalyzes the epoxidation of 11,12 double bond of (5Z,8Z,11Z,14Z)-eicosatetraenoic acid (arachidonate) forming 11,12-epoxyeicosatrienoic acid (11,12-EET) regioisomer. Mechanistically, uses molecular oxygen inserting one oxygen atom into a substrate, and reducing the second into a water molecule, with two electrons provided by NADPH via cytochrome P450 reductase (CPR; NADPH--hemoprotein reductase). This is Cytochrome P450 2C38 from Mus musculus (Mouse).